Consider the following 138-residue polypeptide: Small ribosomal subunit protein uS11c (138 aa).

The segment at 1–22 (MAKAIPKISSRRNGRISSRKGA) is disordered. Positions 9 to 22 (SSRRNGRISSRKGA) are enriched in basic residues.

This sequence belongs to the universal ribosomal protein uS11 family. Part of the 30S ribosomal subunit.

The protein resides in the plastid. It localises to the chloroplast. The sequence is that of Small ribosomal subunit protein uS11c from Solanum bulbocastanum (Wild potato).